The primary structure comprises 312 residues: Bark storage protein B (312 aa).

The N-terminal stretch at M1–I24 is a signal peptide. An N-linked (GlcNAc...) asparagine glycan is attached at N70.

It to wound-inducible poplar endochitinases. As to quaternary structure, monomer. As to expression, bark tissue.

Its function is as follows. May play a role in nitrogen storage. The polypeptide is Bark storage protein B (BSP) (Populus deltoides (Eastern poplar)).